An 86-amino-acid polypeptide reads, in one-letter code: Large ribosomal subunit protein bL31B (86 aa).

It belongs to the bacterial ribosomal protein bL31 family. Type B subfamily. Part of the 50S ribosomal subunit.

The polypeptide is Large ribosomal subunit protein bL31B (Salmonella paratyphi A (strain ATCC 9150 / SARB42)).